We begin with the raw amino-acid sequence, 199 residues long: Recombination protein RecR (199 aa).

The C4-type zinc-finger motif lies at 57–72; sequence CQSCRTFTEETYCPIC. Residues 81–176 form the Toprim domain; the sequence is SVICVVETPA…AVSRIAHGVP (96 aa).

Belongs to the RecR family.

Its function is as follows. May play a role in DNA repair. It seems to be involved in an RecBC-independent recombinational process of DNA repair. It may act with RecF and RecO. In Shewanella piezotolerans (strain WP3 / JCM 13877), this protein is Recombination protein RecR.